The following is a 464-amino-acid chain: MAVYNYDVVVLGSGPAGEGAAMNAAKAGRKVAVVDNRPLVGGNCTHLGTIPSKALRHSVRQIMQFNTNPMFRQIGEPRWFSFPDVLKSAEKVIAKQVTSRTGYYARNRIDTYFGTASFADEQTVEVVCLNGVVEKLVAKQIVIATGSRPYRPADVDFRHPRIYDSDTILSLGHTPRRLIIYGAGVIGCEYASIFSGLGVLVDLIDNRDQLLSFLDSEISDALSYHLRNNNVLIRHNEEYERIEGVENGVVLHLKSGKKIKADALLWCNGRTGNTDQLGLENIGIAVNSRGQIQVDEHYRTEVSNIYAAGDVIGWPSLASAAADQGRSAAGSIVENGSWRFVDDVPTGIYTIPEISSIGKTERELTQAKVPYEVGKAFFKGMARAQISVEPVGMLKILFHRETLEVLGVHCFGYQASEIVHIGQAIMNQKGEANSIKYFINTTFNYPTMAEAYRVAAFDGLNRLF.

35–44 contributes to the FAD binding site; the sequence is DNRPLVGGNC.

Belongs to the class-I pyridine nucleotide-disulfide oxidoreductase family. FAD serves as cofactor.

It localises to the cytoplasm. The catalysed reaction is NAD(+) + NADPH = NADH + NADP(+). In terms of biological role, conversion of NADPH, generated by peripheral catabolic pathways, to NADH, which can enter the respiratory chain for energy generation. The polypeptide is Soluble pyridine nucleotide transhydrogenase (Ectopseudomonas mendocina (strain ymp) (Pseudomonas mendocina)).